A 1690-amino-acid chain; its full sequence is DNA-directed RNA polymerase subunit beta' (1690 aa).

Cys-63, Cys-65, Cys-78, and Cys-81 together coordinate Zn(2+). Positions 753, 755, and 757 each coordinate Mg(2+). Cys-1107, Cys-1295, Cys-1302, and Cys-1305 together coordinate Zn(2+).

The protein belongs to the RNA polymerase beta' chain family. In terms of assembly, the RNAP catalytic core consists of 2 alpha, 1 beta, 1 beta' and 1 omega subunit. When a sigma factor is associated with the core the holoenzyme is formed, which can initiate transcription. Mg(2+) is required as a cofactor. The cofactor is Zn(2+).

The catalysed reaction is RNA(n) + a ribonucleoside 5'-triphosphate = RNA(n+1) + diphosphate. In terms of biological role, DNA-dependent RNA polymerase catalyzes the transcription of DNA into RNA using the four ribonucleoside triphosphates as substrates. In Thermotoga sp. (strain RQ2), this protein is DNA-directed RNA polymerase subunit beta'.